A 374-amino-acid polypeptide reads, in one-letter code: tRNA (guanine(26)-N(2))-dimethyltransferase (374 aa).

The Trm1 methyltransferase domain occupies 1–367 (MILKEGEVVF…ATLKNVIEAI (367 aa)). Arg34, Arg66, Asp86, Asp113, and Ala114 together coordinate S-adenosyl-L-methionine.

This sequence belongs to the class I-like SAM-binding methyltransferase superfamily. Trm1 family.

The catalysed reaction is guanosine(26) in tRNA + 2 S-adenosyl-L-methionine = N(2)-dimethylguanosine(26) in tRNA + 2 S-adenosyl-L-homocysteine + 2 H(+). In terms of biological role, dimethylates a single guanine residue at position 26 of a number of tRNAs using S-adenosyl-L-methionine as donor of the methyl groups. In Methanocaldococcus jannaschii (strain ATCC 43067 / DSM 2661 / JAL-1 / JCM 10045 / NBRC 100440) (Methanococcus jannaschii), this protein is tRNA (guanine(26)-N(2))-dimethyltransferase.